The chain runs to 322 residues: 4-diphosphocytidyl-2-C-methyl-D-erythritol kinase (322 aa).

Residue Lys18 is part of the active site. ATP is bound at residue 130–140 (PMGAGLGGGSS). Asp172 is a catalytic residue.

It belongs to the GHMP kinase family. IspE subfamily.

It catalyses the reaction 4-CDP-2-C-methyl-D-erythritol + ATP = 4-CDP-2-C-methyl-D-erythritol 2-phosphate + ADP + H(+). It functions in the pathway isoprenoid biosynthesis; isopentenyl diphosphate biosynthesis via DXP pathway; isopentenyl diphosphate from 1-deoxy-D-xylulose 5-phosphate: step 3/6. Catalyzes the phosphorylation of the position 2 hydroxy group of 4-diphosphocytidyl-2C-methyl-D-erythritol. The sequence is that of 4-diphosphocytidyl-2-C-methyl-D-erythritol kinase from Psychrobacter arcticus (strain DSM 17307 / VKM B-2377 / 273-4).